A 1450-amino-acid polypeptide reads, in one-letter code: ABC transporter G family member 37 (1450 aa).

In terms of domain architecture, ABC transporter 1 spans 175 to 447 (VKLTGAKTHE…FEDCGFRCPE (273 aa)). Residue 207-214 (GPPSCGKT) participates in ATP binding. The region spanning 525 to 737 (ELFIACISRE…GEIGLSVNEF (213 aa)) is the ABC transmembrane type-2 1 domain. 6 helical membrane-spanning segments follow: residues 544–564 (VYIF…TVFI), 581–601 (ALFF…SMTA), 615–635 (FYPA…LSFF), 661–681 (FILL…LAAI), 687–707 (ASIT…GFVI), and 773–793 (LCAL…ALTF). The interval 810-838 (SELQGTEKSTEDSSVRKKTTDSPVKTEEE) is disordered. The span at 817–838 (KSTEDSSVRKKTTDSPVKTEEE) shows a compositional bias: basic and acidic residues. An ABC transporter 2 domain is found at 850-1103 (VTFQDLNYFV…IIEYFESVPE (254 aa)). Position 895-902 (895-902 (GVSGAGKT)) interacts with ATP. One can recognise an ABC transmembrane type-2 2 domain in the interval 1175 to 1389 (GQFKSILWKM…TLNGFISSQY (215 aa)). 7 consecutive transmembrane segments (helical) span residues 1194 to 1214 (YNLM…ALFW), 1226 to 1246 (MFTV…NNCA), 1282 to 1302 (IPYI…MIGF), 1313 to 1333 (LYSM…LVSI), 1339 to 1359 (VAAI…GFLI), 1365 to 1385 (PGWW…NGFI), and 1422 to 1442 (VTAV…AFFV).

It belongs to the ABC transporter superfamily. ABCG family. PDR (TC 3.A.1.205) subfamily. Expressed in roots and, to a lower extent, in seedlings.

The protein resides in the cell membrane. Its function is as follows. Together with ABCG36, regulates auxin homeostasis and responses by playing a dual role in coumarin (and derivatives) and in the auxin precursor indole 3-butyric acid (IBA) efflux transport, thus influencing roots and root hairs development. Mediates coumarin exudation in the rhizosphere, especially in iron (Fe) deficient conditions, with a strong specificity for highly oxygenated compounds such as scopoletin and derivatives, dihydroxyscopoletin, esculetin, fraxin, fraxetin and esculin; these molecules improve plant Fe nutrition. Involved in the cellular detoxification of xenobiotics by promoting the excretion of some auxinic herbicides including 2,4-dichlorophenoxyacetic acid (2,4-D), 4-(2,4-dichlorophenoxy)butyric acid (2,4-DB) and other members of the phenoxyalkanoic acid family as well as the polar auxin transport inhibitor, napthylphthalamic acid (NPA). May be a general defense protein. The protein is ABC transporter G family member 37 of Arabidopsis thaliana (Mouse-ear cress).